Reading from the N-terminus, the 394-residue chain is Tubulin-like protein CetZ5 (394 aa).

GTP is bound by residues 10-14, 110-112, glutamate 142, asparagine 169, and asparagine 187; these read QAGGN and GTG.

Belongs to the CetZ family.

The protein resides in the cytoplasm. Functionally, involved in cell shape control. This is Tubulin-like protein CetZ5 from Haloferax volcanii (strain ATCC 29605 / DSM 3757 / JCM 8879 / NBRC 14742 / NCIMB 2012 / VKM B-1768 / DS2) (Halobacterium volcanii).